The sequence spans 559 residues: Tectonic-like complex member MKS1 (559 aa).

The 129-residue stretch at 311-439 folds into the C2 B9-type domain; the sequence is LRLFVNGEVV…TVSTWRPVEL (129 aa).

In terms of assembly, part of the tectonic-like complex (also named B9 complex). Interacts with TMEM107. Interacts with TCTN3, AHI1, TCTN1, TCTN2, CC2D2A. Interacts with FLNA. Interacts with TMEM67. Interacts with B9D1 and B9D2.

The protein localises to the cytoplasm. It localises to the cytoskeleton. The protein resides in the cilium basal body. It is found in the microtubule organizing center. Its subcellular location is the centrosome. Component of the tectonic-like complex, a complex localized at the transition zone of primary cilia and acting as a barrier that prevents diffusion of transmembrane proteins between the cilia and plasma membranes. Involved in centrosome migration to the apical cell surface during early ciliogenesis. Required for ciliary structure and function, including a role in regulating length and appropriate number through modulating centrosome duplication. Required for cell branching morphology. This is Tectonic-like complex member MKS1 (MKS1) from Homo sapiens (Human).